The sequence spans 952 residues: Ubiquitin carboxyl-terminal hydrolase CYLD (952 aa).

Residues 106-589 (CEERLSLFRN…LEIMIGKKKG (484 aa)) form an interaction with TRIP region. CAP-Gly domains follow at residues 153-198 (LAER…VFVA) and 253-286 (DVLP…VQLC). The segment at 311-350 (RRPPKLAFMSRGVGDKGSSSHNKPKVTGSTSDPGSRNRSE) is disordered. Residues 327–346 (GSSSHNKPKVTGSTSDPGSR) are compositionally biased toward polar residues. The residue at position 383 (Ser-383) is a Phosphoserine. Residues 386–409 (EMSSDFGHSSPPPQPPSMNSLSSE) are disordered. Positions 390-465 (DFGHSSPPPQ…LPISSGNAHG (76 aa)) are interaction with TRAF2. Residues Ser-414 and Ser-418 each carry the phosphoserine modification. Residues 466-680 (LEVGSLAEVK…FTSEEKDPEE (215 aa)) are interaction with IKBKG/NEMO. The CAP-Gly 3 domain maps to 488–531 (GQPPGLSDVLAGLELEDECAGCTDGTFRGTRYFTCALKKALFVK). Residues 588–946 (KGIQGHYNSC…DAYMCMYQSP (359 aa)) enclose the USP domain. Cys-597 serves as the catalytic Nucleophile. Positions 777–829 (LEDTPRQCRICGGLAMYECRECYDDPDISAGKIKQFCKTCSTQVHLHPRRLNH) are B-box. Residues Cys-784, Cys-787, Cys-795, Cys-798, Cys-813, Cys-816, His-821, and His-829 each coordinate Zn(2+). His-867 functions as the Proton acceptor in the catalytic mechanism.

This sequence belongs to the peptidase C19 family. In terms of assembly, interacts (via CAP-Gly domain) with IKBKG/NEMO (via proline-rich C-terminal region). Interacts with TRAF2 and TRIP. Interacts with PLK1, DVL1, DVL3, MAVS, TBK1, IKKE and RIGI. Interacts (via CAP-Gly domain) with microtubules. Interacts with HDAC6 and BCL3. Interacts with MAP3K7. Identified in a complex with TRAF6 and SQSTM1. Interacts with OPTN and SQSTM1. Interacts with CEP350. Interacts with RNF31; the interaction is indirect and is mediated via SPATA2. Interacts with SPATA2 (via the PUB domain); the interaction is direct and recruits CYLD to the LUBAC complex, thereby regulating TNF-alpha-induced necroptosis. Post-translationally, phosphorylated on several serine residues by IKKA and/or IKKB in response to immune stimuli. Phosphorylation requires IKBKG. Phosphorylation abolishes TRAF2 deubiquitination, interferes with the activation of Jun kinases, and strongly reduces CD40-dependent gene activation by NF-kappa-B. In terms of processing, ubiquitinated. Polyubiquitinated in hepatocytes treated with palmitic acid. Ubiquitination is mediated by E3 ligase TRIM47 and leads to proteasomal degradation.

The protein localises to the cytoplasm. It localises to the perinuclear region. The protein resides in the cytoskeleton. It is found in the cell membrane. Its subcellular location is the microtubule organizing center. The protein localises to the centrosome. It localises to the spindle. The protein resides in the cilium basal body. It carries out the reaction Thiol-dependent hydrolysis of ester, thioester, amide, peptide and isopeptide bonds formed by the C-terminal Gly of ubiquitin (a 76-residue protein attached to proteins as an intracellular targeting signal).. Its function is as follows. Deubiquitinase that specifically cleaves 'Lys-63'- and linear 'Met-1'-linked polyubiquitin chains and is involved in NF-kappa-B activation and TNF-alpha-induced necroptosis. Negatively regulates NF-kappa-B activation by deubiquitinating upstream signaling factors. Contributes to the regulation of cell survival, proliferation and differentiation via its effects on NF-kappa-B activation. Negative regulator of Wnt signaling. Inhibits HDAC6 and thereby promotes acetylation of alpha-tubulin and stabilization of microtubules. Plays a role in the regulation of microtubule dynamics, and thereby contributes to the regulation of cell proliferation, cell polarization, cell migration, and angiogenesis. Required for normal cell cycle progress and normal cytokinesis. Inhibits nuclear translocation of NF-kappa-B. Plays a role in the regulation of inflammation and the innate immune response, via its effects on NF-kappa-B activation. Dispensable for the maturation of intrathymic natural killer cells, but required for the continued survival of immature natural killer cells. Negatively regulates TNFRSF11A signaling and osteoclastogenesis. Involved in the regulation of ciliogenesis, allowing ciliary basal bodies to migrate and dock to the plasma membrane; this process does not depend on NF-kappa-B activation. Ability to remove linear ('Met-1'-linked) polyubiquitin chains regulates innate immunity and TNF-alpha-induced necroptosis: recruited to the LUBAC complex via interaction with SPATA2 and restricts linear polyubiquitin formation on target proteins. Regulates innate immunity by restricting linear polyubiquitin formation on RIPK2 in response to NOD2 stimulation. Involved in TNF-alpha-induced necroptosis by removing linear ('Met-1'-linked) polyubiquitin chains from RIPK1, thereby regulating the kinase activity of RIPK1. Negatively regulates intestinal inflammation by removing 'Lys-63' linked polyubiquitin chain of NLRP6, thereby reducing the interaction between NLRP6 and PYCARD/ASC and formation of the NLRP6 inflammasome. Does not catalyze deubiquitination of heterotypic 'Lys-63'-/'Lys-48'-linked branched ubiquitin chains. Removes 'Lys-63' linked polyubiquitin chain of MAP3K7, which inhibits phosphorylation and blocks downstream activation of the JNK-p38 kinase cascades. Also removes 'Lys-63'-linked polyubiquitin chains of MAP3K1 and MA3P3K3, which inhibit their interaction with MAP2K1 and MAP2K2. The sequence is that of Ubiquitin carboxyl-terminal hydrolase CYLD (Cyld) from Mus musculus (Mouse).